The chain runs to 56 residues: Defensin-1 (56 aa).

An N-terminal signal peptide occupies residues Met-1–Gly-24. 3 disulfide bridges follow: Cys-26/Cys-45, Cys-31/Cys-53, and Cys-35/Cys-55.

Its subcellular location is the secreted. Functionally, antibacterial protein involved in the immune response to septic injury. When combined with 14.026 kDa and 14.059 kDa hemolymph antimicrobial peptides, it has a strong cooperative activity against the Gram-positive bacteria B.subtilis and S.aureus, and against the Gram-negative bacteria E.coli DH5-alpha and K.pneumoniae ATCC 138833. Does not show detectable antibacterial activity when present alone. Has no hemolytic activity in human erythrocytes. This Centruroides limpidus (Mexican scorpion) protein is Defensin-1.